The primary structure comprises 696 residues: Carotenoid dioxygenase carX (696 aa).

Residues methionine 1 to glutamine 16 are compositionally biased toward polar residues. The tract at residues methionine 1–histidine 27 is disordered. Fe(2+)-binding residues include histidine 244, histidine 298, histidine 361, and histidine 642.

It belongs to the carotenoid oxygenase family. Fe(2+) serves as cofactor.

It carries out the reaction all-trans-beta-carotene + O2 = 2 all-trans-retinal. The protein operates within carotenoid biosynthesis. In terms of biological role, carotenoid dioxygenase; part of the car gene cluster that mediates the biosynthesis of neurosporaxanthin, a carboxylic apocarotenoid acting as an essential protective pigments and leading to orange pigmentation. CarX mediates the cleavage of beta-carotene produced by carAR into retinal, the rhodopsin's chromophore that is involved in the regulation of the carotenoid biosynthetic pathway via a negative feedback mechanism. It can also convert the synthetic compound beta-apo-8'-carotenal but not C35-apocarotenoids such as the acidic apocarotenoid neurosporaxanthin (C35), as well as its corresponding aldehyde beta-apo-4'-carotenal. This Gibberella fujikuroi (strain CBS 195.34 / IMI 58289 / NRRL A-6831) (Bakanae and foot rot disease fungus) protein is Carotenoid dioxygenase carX.